Consider the following 460-residue polypeptide: Nucleosome assembly protein 1-like 2 (460 aa).

Basic and acidic residues-rich tracts occupy residues 1–11 (MAESENRKELS) and 27–36 (LGEHLERGED). Disordered regions lie at residues 1–88 (MAES…ADRP) and 214–238 (EEEE…EDPK). Residues 214-236 (EEEEEEEEDDIEATGEENKEEED) show a composition bias toward acidic residues. The short motif at 346-352 (IKKKQKH) is the Nuclear localization signal element.

Belongs to the nucleosome assembly protein (NAP) family.

Its subcellular location is the nucleus. Acidic protein which may be involved in interactions with other proteins or DNA. In Homo sapiens (Human), this protein is Nucleosome assembly protein 1-like 2 (NAP1L2).